The primary structure comprises 156 residues: Arginine repressor (156 aa).

It belongs to the ArgR family.

Its subcellular location is the cytoplasm. It participates in amino-acid biosynthesis; L-arginine biosynthesis [regulation]. In terms of biological role, regulates arginine biosynthesis genes. The polypeptide is Arginine repressor (Pectobacterium atrosepticum (strain SCRI 1043 / ATCC BAA-672) (Erwinia carotovora subsp. atroseptica)).